A 492-amino-acid chain; its full sequence is Protein GvpD2 (492 aa).

ATP is bound at residue 39–46; sequence GAPGTGKT. Over residues 355-368 the composition is skewed to basic and acidic residues; sequence RDHDDAVDPDRLPG. The disordered stretch occupies residues 355-379; sequence RDHDDAVDPDRLPGHDTTPTEHGTL.

This sequence belongs to the gas vesicle GvpD family. As to quaternary structure, homodimer. Interacts with GvpE, also with GvpE from H.mediterranei.

Its subcellular location is the cytoplasm. Its function is as follows. Causes a decrease in the amount of GvpE protein. Gas vesicles are hollow, gas filled proteinaceous nanostructures found in several microbial planktonic microorganisms. They allow positioning of halobacteria at the optimal depth for growth in the poorly aerated, shallow brine pools of their habitat. In terms of biological role, expression of 2 c-vac DNA fragments containing 2 divergently transcribed regions (gvpE-gvpF-gvpG-gvpH-gvpI-gvpJ-gvpK-gvpL-gvpM and gvpA-gvpC-gvpN-gvpO) allows H.volcanii to produce gas vesicles. The protein is Protein GvpD2 of Halobacterium salinarum (strain ATCC 700922 / JCM 11081 / NRC-1) (Halobacterium halobium).